We begin with the raw amino-acid sequence, 225 residues long: Suppressor of cytokine signaling 3 (225 aa).

The tract at residues 22 to 33 (LKTFSSKSEYQL) is kinase inhibitory region (KIR). The extended SH2 subdomain (ESS) stretch occupies residues 34–45 (VVNAVCKLQESG). The SH2 domain maps to 46–142 (FYWSAVTGGE…APSFPAPPTE (97 aa)). Pro residues predominate over residues 131-142 (PGAPSFPAPPTE). Positions 131-162 (PGAPSFPAPPTEPSSEVSEQPPSQPLPGNPPR) are disordered. One can recognise an SOCS box domain in the interval 177-224 (VLSRPLSSNVATLQHLCRKTVNGHLDSYEKVTQLPGAIREFLDQYDAP).

As to quaternary structure, interacts with multiple activated proteins of the tyrosine kinase signaling pathway including IGF1 receptor, insulin receptor and JAK2. Binding to JAK2 is mediated through the KIR and SH2 domains to a phosphorylated tyrosine residue within the JAK2 JH1 domain. Binds specific activated tyrosine residues of the leptin, EPO, IL12, GSCF and gp130 receptors. Interaction with CSNK1E stabilizes SOCS3 protein. Component of the probable ECS(SOCS3) E3 ubiquitin-protein ligase complex which contains CUL5, RNF7/RBX2, Elongin BC complex and SOCS3. Interacts with CUL5, RNF7, ELOB and ELOC. Interacts with FGFR3. Interacts with INSR. Interacts with BCL10; this interaction may interfere with BCL10-binding with PELI2. Interacts with NOD2 (via CARD domain); the interaction promotes NOD2 degradation. In terms of processing, phosphorylated on tyrosine residues after stimulation by the cytokines, IL-2, EPO or IGF1.

It functions in the pathway protein modification; protein ubiquitination. Functionally, SOCS family proteins form part of a classical negative feedback system that regulates cytokine signal transduction. SOCS3 is involved in negative regulation of cytokines that signal through the JAK/STAT pathway. Inhibits cytokine signal transduction by binding to tyrosine kinase receptors including IL6ST/gp130, LIF, erythropoietin, insulin, IL12, GCSF and leptin receptors. Binding to JAK2 inhibits its kinase activity and regulates IL6 signaling. Suppresses fetal liver erythropoiesis. Regulates onset and maintenance of allergic responses mediated by T-helper type 2 cells. Probable substrate recognition component of a SCF-like ECS (Elongin BC-CUL2/5-SOCS-box protein) E3 ubiquitin-protein ligase complex which mediates the ubiquitination and subsequent proteasomal degradation of target proteins. The sequence is that of Suppressor of cytokine signaling 3 (SOCS3) from Canis lupus familiaris (Dog).